A 426-amino-acid polypeptide reads, in one-letter code: Serine--tRNA ligase (426 aa).

233–235 (TAE) is a binding site for L-serine. Residue 264 to 266 (RSE) coordinates ATP. E287 contacts L-serine. 351-354 (EISS) contacts ATP. S387 serves as a coordination point for L-serine.

Belongs to the class-II aminoacyl-tRNA synthetase family. Type-1 seryl-tRNA synthetase subfamily. As to quaternary structure, homodimer. The tRNA molecule binds across the dimer.

The protein localises to the cytoplasm. It catalyses the reaction tRNA(Ser) + L-serine + ATP = L-seryl-tRNA(Ser) + AMP + diphosphate + H(+). The catalysed reaction is tRNA(Sec) + L-serine + ATP = L-seryl-tRNA(Sec) + AMP + diphosphate + H(+). It functions in the pathway aminoacyl-tRNA biosynthesis; selenocysteinyl-tRNA(Sec) biosynthesis; L-seryl-tRNA(Sec) from L-serine and tRNA(Sec): step 1/1. Its function is as follows. Catalyzes the attachment of serine to tRNA(Ser). Is also able to aminoacylate tRNA(Sec) with serine, to form the misacylated tRNA L-seryl-tRNA(Sec), which will be further converted into selenocysteinyl-tRNA(Sec). The protein is Serine--tRNA ligase of Francisella philomiragia subsp. philomiragia (strain ATCC 25017 / CCUG 19701 / FSC 153 / O#319-036).